Consider the following 149-residue polypeptide: Large ribosomal subunit protein uL13 (149 aa).

The protein belongs to the universal ribosomal protein uL13 family. In terms of assembly, part of the 50S ribosomal subunit.

Its function is as follows. This protein is one of the early assembly proteins of the 50S ribosomal subunit, although it is not seen to bind rRNA by itself. It is important during the early stages of 50S assembly. The polypeptide is Large ribosomal subunit protein uL13 (Prosthecochloris aestuarii (strain DSM 271 / SK 413)).